We begin with the raw amino-acid sequence, 343 residues long: Cytoplasmic tRNA 2-thiolation protein 1 (343 aa).

This sequence belongs to the TtcA family. CTU1/NCS6/ATPBD3 subfamily.

The protein localises to the cytoplasm. Its pathway is tRNA modification; 5-methoxycarbonylmethyl-2-thiouridine-tRNA biosynthesis. Functionally, plays a central role in 2-thiolation of mcm(5)S(2)U at tRNA wobble positions of tRNA(Lys), tRNA(Glu) and tRNA(Gln). Directly binds tRNAs and probably acts by catalyzing adenylation of tRNAs, an intermediate required for 2-thiolation. It is unclear whether it acts as a sulfurtransferase that transfers sulfur from thiocarboxylated URM1 onto the uridine of tRNAs at wobble position. This is Cytoplasmic tRNA 2-thiolation protein 1 from Drosophila grimshawi (Hawaiian fruit fly).